We begin with the raw amino-acid sequence, 236 residues long: Cell division protein FtsQ (236 aa).

At 1–14 (MWDNHQALNQVADW) the chain is on the cytoplasmic side. Residues 15–37 (LFTLAGLTTIYLMVQWTIHLPLL) form a helical membrane-spanning segment. Residues 37–111 (LPLKEVHIRS…NGLDVVVEEH (75 aa)) enclose the POTRA domain. Over 38–236 (PLKEVHIRSN…VSGFAARGTR (199 aa)) the chain is Periplasmic.

This sequence belongs to the FtsQ/DivIB family. FtsQ subfamily. In terms of assembly, part of a complex composed of FtsB, FtsL and FtsQ.

The protein localises to the cell inner membrane. Functionally, essential cell division protein. May link together the upstream cell division proteins, which are predominantly cytoplasmic, with the downstream cell division proteins, which are predominantly periplasmic. May control correct divisome assembly. This chain is Cell division protein FtsQ, found in Nitrosospira multiformis (strain ATCC 25196 / NCIMB 11849 / C 71).